A 248-amino-acid chain; its full sequence is UPF0246 protein RAF_ORF0648 (248 aa).

The protein belongs to the UPF0246 family.

In Rickettsia africae (strain ESF-5), this protein is UPF0246 protein RAF_ORF0648.